A 197-amino-acid chain; its full sequence is MDDFDPTVTNSPKFRLIAVQCLFSITAFAAMLSQRHGLAGPDEMTLEECGPQACGYQKFSNFKFLIAVCIIYAVFSLVVMAAYLLQRVPPPVTELTAYTVMNVLLFAAFAMSATSCNITIVDPVYPVCKRATSAKASIAFAFFTWLAVCFSMLFTYKEWRDVDYHVPGSGAYEFVPGVTSGSSRSSYPPQASSSSYA.

The Cytoplasmic segment spans residues 1–13 (MDDFDPTVTNSPK). The helical transmembrane segment at 14–34 (FRLIAVQCLFSITAFAAMLSQ) threads the bilayer. The Extracellular segment spans residues 35–63 (RHGLAGPDEMTLEECGPQACGYQKFSNFK). Residues 64–84 (FLIAVCIIYAVFSLVVMAAYL) form a helical membrane-spanning segment. Residues 85 to 99 (LQRVPPPVTELTAYT) are Cytoplasmic-facing. Residues 100–120 (VMNVLLFAAFAMSATSCNITI) traverse the membrane as a helical segment. The Extracellular segment spans residues 121–135 (VDPVYPVCKRATSAK). The helical transmembrane segment at 136-156 (ASIAFAFFTWLAVCFSMLFTY) threads the bilayer. Topologically, residues 157-197 (KEWRDVDYHVPGSGAYEFVPGVTSGSSRSSYPPQASSSSYA) are cytoplasmic. Residues 178 to 197 (VTSGSSRSSYPPQASSSSYA) are disordered. Low complexity predominate over residues 180-197 (SGSSRSSYPPQASSSSYA).

Belongs to the Casparian strip membrane proteins (CASP) family. As to quaternary structure, homodimer and heterodimers.

It localises to the cell membrane. The polypeptide is CASP-like protein 0U1 (Micromonas commoda (strain RCC299 / NOUM17 / CCMP2709) (Picoplanktonic green alga)).